Reading from the N-terminus, the 595-residue chain is Elongation factor 4 (595 aa).

Residues 2–183 (KNIRNFCIIA…AIVEQVPAPA (182 aa)) form the tr-type G domain. Residues 14–19 (DHGKST) and 130–133 (NKVD) contribute to the GTP site.

Belongs to the TRAFAC class translation factor GTPase superfamily. Classic translation factor GTPase family. LepA subfamily.

The protein resides in the cell inner membrane. The enzyme catalyses GTP + H2O = GDP + phosphate + H(+). Functionally, required for accurate and efficient protein synthesis under certain stress conditions. May act as a fidelity factor of the translation reaction, by catalyzing a one-codon backward translocation of tRNAs on improperly translocated ribosomes. Back-translocation proceeds from a post-translocation (POST) complex to a pre-translocation (PRE) complex, thus giving elongation factor G a second chance to translocate the tRNAs correctly. Binds to ribosomes in a GTP-dependent manner. This chain is Elongation factor 4, found in Porphyromonas gingivalis (strain ATCC 33277 / DSM 20709 / CIP 103683 / JCM 12257 / NCTC 11834 / 2561).